A 104-amino-acid polypeptide reads, in one-letter code: Large ribosomal subunit protein uL24 (104 aa).

This sequence belongs to the universal ribosomal protein uL24 family. Part of the 50S ribosomal subunit.

Its function is as follows. One of two assembly initiator proteins, it binds directly to the 5'-end of the 23S rRNA, where it nucleates assembly of the 50S subunit. Functionally, one of the proteins that surrounds the polypeptide exit tunnel on the outside of the subunit. This is Large ribosomal subunit protein uL24 from Sodalis glossinidius (strain morsitans).